The primary structure comprises 537 residues: Chaperonin GroEL (537 aa).

ATP is bound by residues 29-32 (TLGP), 86-90 (DGTTT), glycine 413, 477-479 (NAA), and aspartate 493.

This sequence belongs to the chaperonin (HSP60) family. In terms of assembly, forms a cylinder of 14 subunits composed of two heptameric rings stacked back-to-back. Interacts with the co-chaperonin GroES.

It is found in the cytoplasm. The enzyme catalyses ATP + H2O + a folded polypeptide = ADP + phosphate + an unfolded polypeptide.. Functionally, together with its co-chaperonin GroES, plays an essential role in assisting protein folding. The GroEL-GroES system forms a nano-cage that allows encapsulation of the non-native substrate proteins and provides a physical environment optimized to promote and accelerate protein folding. The sequence is that of Chaperonin GroEL from Bifidobacterium animalis subsp. lactis (strain AD011).